A 338-amino-acid polypeptide reads, in one-letter code: Photosystem II assembly lipoprotein Ycf48 (338 aa).

Residues 1–23 (MKRLFSNVINLTLVLIVGVALSG) form the signal peptide. Cys24 is lipidated: N-palmitoyl cysteine. Cys24 is lipidated: S-diacylglycerol cysteine.

The protein belongs to the Ycf48 family. In terms of assembly, part of early PSII assembly complexes which includes D1 (psbA) and PsbI; not found in mature PSII. Binds to the lumenal side of PSII complexes. Interacts with YidC.

The protein localises to the cellular thylakoid membrane. Its function is as follows. A factor required for optimal assembly of photosystem II (PSII), acting in the early stages of PSII assembly. Also plays a role in replacement of photodamaged D1 (psbA). Assists YidC in synthesis of chlorophyll-binding proteins. The protein is Photosystem II assembly lipoprotein Ycf48 of Prochlorococcus marinus (strain NATL2A).